The chain runs to 40 residues: Alpha-conotoxin-like Lp1.6b (40 aa).

Positions 1 to 23 are excised as a propeptide; that stretch reads VVLGPASDGRNAAANNKASDLIR. Gln-24 carries the post-translational modification Pyrrolidone carboxylic acid. 2 cysteine pairs are disulfide-bonded: Cys-26–Cys-32 and Cys-27–Cys-39.

The protein belongs to the conotoxin A superfamily. As to expression, expressed by the venom duct.

It is found in the secreted. Alpha-conotoxins act on postsynaptic membranes, they bind to the nicotinic acetylcholine receptors (nAChR) and thus inhibit them. This chain is Alpha-conotoxin-like Lp1.6b, found in Conus leopardus (Leopard cone).